The primary structure comprises 641 residues: Transcription termination factor MTERF2, chloroplastic (641 aa).

Disordered stretches follow at residues 54–80 and 606–641; these read LKLNKNPNESQETFVPPPPPPRRDLDG and FEAGLDSEDSQPSDENISDQEIAFSDEAEEEEDLTE. Acidic residues predominate over residues 610-641; it reads LDSEDSQPSDENISDQEIAFSDEAEEEEDLTE.

The protein belongs to the mTERF family.

The protein resides in the plastid. It localises to the chloroplast. Functionally, transcription termination factor involved in processing of plastid transcripts. Essential for embryogenesis. The sequence is that of Transcription termination factor MTERF2, chloroplastic from Arabidopsis thaliana (Mouse-ear cress).